Consider the following 110-residue polypeptide: MFGKGGMGNLMKQAQMMQERMQKMQEEVAKMEVTGESGAGMVKITITGSHNVRRVTIDPSLLQDDDQEMLEDLIAAAFNDAVRRAEEQNKAKMAEITGGMQLPPGFKMPF.

The protein belongs to the YbaB/EbfC family. In terms of assembly, homodimer.

It is found in the cytoplasm. Its subcellular location is the nucleoid. Binds to DNA and alters its conformation. May be involved in regulation of gene expression, nucleoid organization and DNA protection. The sequence is that of Nucleoid-associated protein Tola_2216 from Tolumonas auensis (strain DSM 9187 / NBRC 110442 / TA 4).